Consider the following 249-residue polypeptide: Coproheme decarboxylase (249 aa).

Residues R131, 145–149, H172, and Q185 each bind Fe-coproporphyrin III; that span reads YPMDK. The active site involves Y145.

The protein belongs to the ChdC family. Type 1 subfamily. It depends on Fe-coproporphyrin III as a cofactor.

It carries out the reaction Fe-coproporphyrin III + 2 H2O2 + 2 H(+) = heme b + 2 CO2 + 4 H2O. The enzyme catalyses Fe-coproporphyrin III + H2O2 + H(+) = harderoheme III + CO2 + 2 H2O. It catalyses the reaction harderoheme III + H2O2 + H(+) = heme b + CO2 + 2 H2O. The protein operates within porphyrin-containing compound metabolism; protoheme biosynthesis. Involved in coproporphyrin-dependent heme b biosynthesis. Catalyzes the decarboxylation of Fe-coproporphyrin III (coproheme) to heme b (protoheme IX), the last step of the pathway. The reaction occurs in a stepwise manner with a three-propionate intermediate. The protein is Coproheme decarboxylase of Staphylococcus haemolyticus (strain JCSC1435).